The sequence spans 671 residues: TOM1-like protein 6 (671 aa).

Alanine 2 carries the post-translational modification N-acetylalanine. Positions 15–144 constitute a VHS domain; that stretch reads ATSDLLLGPD…ELRRSGVEFP (130 aa). Serine 147 bears the Phosphoserine mark. Residues 229 to 317 enclose the GAT domain; the sequence is EVEGLSLSSI…LLAKHDAIAS (89 aa). Disordered stretches follow at residues 320 to 620 and 636 to 671; these read PLPV…VGQK and GSAD…RKMI. Positions 334-362 are enriched in low complexity; sequence ASKPADSSPKSSEAKDSSSIAGSSSPIPA. Residues 372–382 show a composition bias toward acidic residues; that stretch reads DEEYEEEEDEF. Residues 395–405 show a composition bias toward polar residues; that stretch reads SVTTDPTSLES. Low complexity predominate over residues 407–417; sequence NAASNALALAL. The span at 444–459 shows a compositional bias: pro residues; sequence STPPAPSSQPSPPPPA. Low complexity predominate over residues 483–554; it reads AQQQQPQQPQ…QPSTRPQNPY (72 aa). Composition is skewed to polar residues over residues 562-598 and 605-616; these read ASTS…NSFP and QATSTASNSGVS. Residue serine 596 is modified to Phosphoserine. The span at 647 to 663 shows a compositional bias: low complexity; that stretch reads NSSNGSQNLSGSQTQQS.

The protein belongs to the TOM1 family. As to expression, ubiquitously expressed.

It is found in the endosome. It localises to the multivesicular body. The protein localises to the cytoplasm. Its subcellular location is the early endosome membrane. Acts as a gatekeeper for degradative protein sorting to the vacuole. Plays a role in recognition of ubiquitinated PIN2 auxin carrier at the plasma membrane and further to its endocytic sorting. Binds ubiquitin in vitro. Might contribute to the loading of the ESCRT machinery. The sequence is that of TOM1-like protein 6 from Arabidopsis thaliana (Mouse-ear cress).